A 237-amino-acid polypeptide reads, in one-letter code: Ribonuclease PH (237 aa).

Phosphate is bound by residues R86 and 124 to 126 (GTR).

The protein belongs to the RNase PH family. In terms of assembly, homohexameric ring arranged as a trimer of dimers.

It carries out the reaction tRNA(n+1) + phosphate = tRNA(n) + a ribonucleoside 5'-diphosphate. Functionally, phosphorolytic 3'-5' exoribonuclease that plays an important role in tRNA 3'-end maturation. Removes nucleotide residues following the 3'-CCA terminus of tRNAs; can also add nucleotides to the ends of RNA molecules by using nucleoside diphosphates as substrates, but this may not be physiologically important. Probably plays a role in initiation of 16S rRNA degradation (leading to ribosome degradation) during starvation. The sequence is that of Ribonuclease PH from Shewanella oneidensis (strain ATCC 700550 / JCM 31522 / CIP 106686 / LMG 19005 / NCIMB 14063 / MR-1).